Consider the following 250-residue polypeptide: MGNLCVDVITLFPEMFSAITEYGITSRAVKQGLLQVTCWNPRDYTTDRHHTVDDRPFGGGPGMVMKIKPLEDALVSARQATGAAAKVIYLSPQGRKLTQQAVKGLAEQESLILIAGRYEGIDERFIEAHVDEEWSIGDYVLSGGELPAMVLIDAVTRLLPGALGHVDSAEEDSFTDGLLDCPHYTRPEVYADQRVPDVLLSGNHAHIRRWRMKQSLGRTFERRADLLESRSLSGEEKKLLEEYLRERDDS.

Residues Gly-116 and 136 to 141 (IGDYVL) each bind S-adenosyl-L-methionine.

Belongs to the RNA methyltransferase TrmD family. In terms of assembly, homodimer.

The protein localises to the cytoplasm. The catalysed reaction is guanosine(37) in tRNA + S-adenosyl-L-methionine = N(1)-methylguanosine(37) in tRNA + S-adenosyl-L-homocysteine + H(+). Its function is as follows. Specifically methylates guanosine-37 in various tRNAs. The chain is tRNA (guanine-N(1)-)-methyltransferase from Pseudomonas putida (strain GB-1).